We begin with the raw amino-acid sequence, 411 residues long: S-inosyl-L-homocysteine hydrolase (411 aa).

Residues Asp121 and Glu146 each contribute to the substrate site. 147–149 lines the NAD(+) pocket; sequence TTT. Residues Lys176 and Asp180 each coordinate substrate. NAD(+) contacts are provided by residues Asn181, 210 to 215, Glu233, Asn268, 289 to 291, and Asn335; these read GYGWCG and SGH.

The protein belongs to the adenosylhomocysteinase family. It depends on NAD(+) as a cofactor.

Its subcellular location is the cytoplasm. The enzyme catalyses S-inosyl-L-homocysteine + H2O = L-homocysteine + inosine. It participates in amino-acid biosynthesis; S-adenosyl-L-methionine biosynthesis. Catalyzes the hydrolysis of S-inosyl-L-homocysteine (SIH) to L-homocysteine (Hcy) and inosine. Likely functions in a S-adenosyl-L-methionine (SAM) recycling pathway from S-adenosyl-L-homocysteine (SAH) produced from SAM-dependent methylation reactions. Can also catalyze the reverse reaction in vitro, i.e. the synthesis of SIH from Hcy and inosine. The chain is S-inosyl-L-homocysteine hydrolase from Methanosarcina mazei (strain ATCC BAA-159 / DSM 3647 / Goe1 / Go1 / JCM 11833 / OCM 88) (Methanosarcina frisia).